The sequence spans 309 residues: Protein FdhE homolog (309 aa).

Belongs to the FdhE family.

The protein resides in the cytoplasm. In terms of biological role, necessary for formate dehydrogenase activity. The chain is Protein FdhE homolog from Citrobacter koseri (strain ATCC BAA-895 / CDC 4225-83 / SGSC4696).